Reading from the N-terminus, the 273-residue chain is Pantothenate synthetase (273 aa).

M27–H34 is an ATP binding site. H34 serves as the catalytic Proton donor. A (R)-pantoate-binding site is contributed by Q58. Q58 lines the beta-alanine pocket. G144 to D147 serves as a coordination point for ATP. A (R)-pantoate-binding site is contributed by Q150. Residues V173 and L181–R184 each bind ATP.

Belongs to the pantothenate synthetase family. In terms of assembly, homodimer.

The protein resides in the cytoplasm. It catalyses the reaction (R)-pantoate + beta-alanine + ATP = (R)-pantothenate + AMP + diphosphate + H(+). The protein operates within cofactor biosynthesis; (R)-pantothenate biosynthesis; (R)-pantothenate from (R)-pantoate and beta-alanine: step 1/1. Catalyzes the condensation of pantoate with beta-alanine in an ATP-dependent reaction via a pantoyl-adenylate intermediate. This Nitratiruptor sp. (strain SB155-2) protein is Pantothenate synthetase.